A 173-amino-acid chain; its full sequence is Transcription factor E (173 aa).

The HTH TFE/IIEalpha-type domain occupies 3–88 (NNPIIQQVLL…TWRATFTKLP (86 aa)).

This sequence belongs to the TFE family. In terms of assembly, monomer. Interaction with RNA polymerase subunits RpoF and RpoE is necessary for Tfe stimulatory transcription activity. Able to interact with Tbp and RNA polymerase in the absence of DNA promoter. Interacts both with the preinitiation and elongation complexes.

Functionally, transcription factor that plays a role in the activation of archaeal genes transcribed by RNA polymerase. Facilitates transcription initiation by enhancing TATA-box recognition by TATA-box-binding protein (Tbp), and transcription factor B (Tfb) and RNA polymerase recruitment. Not absolutely required for transcription in vitro, but particularly important in cases where Tbp or Tfb function is not optimal. It dynamically alters the nucleic acid-binding properties of RNA polymerases by stabilizing the initiation complex and destabilizing elongation complexes. Seems to translocate with the RNA polymerase following initiation and acts by binding to the non template strand of the transcription bubble in elongation complexes. The protein is Transcription factor E of Methanococcus aeolicus (strain ATCC BAA-1280 / DSM 17508 / OCM 812 / Nankai-3).